Here is a 106-residue protein sequence, read N- to C-terminus: Large ribosomal subunit protein eL34 (106 aa).

The protein belongs to the eukaryotic ribosomal protein eL34 family.

In Hyperthermus butylicus (strain DSM 5456 / JCM 9403 / PLM1-5), this protein is Large ribosomal subunit protein eL34.